The sequence spans 116 residues: MNEMLRAIEQEQLKNEVPNFGPGDTVKVHVRIIEGKRERIQVFEGVVLKRQGGGARETFTVRKMSFNVGVERTFPVHSPKIEKIEVTRKGKVRRAKLNYLRGRVGKAAKIKEARNK.

Belongs to the bacterial ribosomal protein bL19 family.

This protein is located at the 30S-50S ribosomal subunit interface and may play a role in the structure and function of the aminoacyl-tRNA binding site. The chain is Large ribosomal subunit protein bL19 from Clostridioides difficile (strain 630) (Peptoclostridium difficile).